Reading from the N-terminus, the 1099-residue chain is SLIT-ROBO Rho GTPase-activating protein 3 (1099 aa).

Residues 19–314 form the F-BAR domain; the sequence is AQIKEIRTQL…AVDNLDSRSD (296 aa). The segment at 205–225 is disordered; it reads HEDRPQRRSSVKKIEKMKEKR. Positions 352–392 form a coiled coil; it reads QTELLMRYHQLQSRLATLKIENEEVRKTLDATMQTLQDMLT. The tract at residues 471-493 is disordered; it reads ERAECGTTRPPCLPPKPQKMRRP. One can recognise a Rho-GAP domain in the interval 506-694; it reads GSMEAFIKDS…TIIIHHEAIF (189 aa). The 60-residue stretch at 744 to 803 folds into the SH3 domain; sequence VEQIEAIAKFDYMGRSPRELSFKKGASLLLYHRASEDWWEGRHNGVDGLIPHQYIVVQDM. The segment covering 809-820 has biased composition (polar residues); that stretch reads DSLSQKADSEAS. The interval 809–847 is disordered; the sequence is DSLSQKADSEASSGPLLDDKASSKNDLQSPTEHISDYGF. 5 positions are modified to phosphoserine: S817, S820, S821, S837, and S858. 2 disordered regions span residues 861–911 and 926–950; these read AAIP…SPEK and PDKKALSEGHSMRSTCGSTRHSSLG. Residues 926–936 are compositionally biased toward basic and acidic residues; the sequence is PDKKALSEGHS. Residues 937–947 are compositionally biased toward polar residues; sequence MRSTCGSTRHS. The stretch at 952-987 forms a coiled coil; that stretch reads HKSLEAEALAEDIEKTMSTALHELRELERQNTVKQA. S954 is subject to Phosphoserine. Positions 995-1099 are disordered; that stretch reads LEPLKNPPGP…NSSADKSGTM (105 aa). Composition is skewed to low complexity over residues 1026-1038 and 1060-1074; these read RRSSSSSTEMMTT and VRPVVQHRSSSSSSS. The segment covering 1089–1099 has biased composition (polar residues); sequence PNSSADKSGTM.

As to quaternary structure, homodimer. Forms a heterooligomer with SRGAP1 and SRGAP2 through its F-BAR domain. Interacts with WASF1. Probably interacts with ROBO1. Interacts with FASLG. As to expression, highly expressed in adult and fetal brain. Expressed at low levels in kidney. Isoform 3 is expressed in the kidney but is absent in the brain.

Its function is as follows. GTPase-activating protein for RAC1 and perhaps Cdc42, but not for RhoA small GTPase. May attenuate RAC1 signaling in neurons. The sequence is that of SLIT-ROBO Rho GTPase-activating protein 3 (SRGAP3) from Homo sapiens (Human).